A 228-amino-acid polypeptide reads, in one-letter code: uncharacterized protein (228 aa).

The region spanning 99-207 is the tRNA-binding domain; it reads LANKVPFVVC…PKIKVGKPFI (109 aa).

This is an uncharacterized protein from Mycoplasma genitalium (strain ATCC 33530 / DSM 19775 / NCTC 10195 / G37) (Mycoplasmoides genitalium).